Here is a 756-residue protein sequence, read N- to C-terminus: Hormone-sensitive lipase (756 aa).

Positions 350–352 match the Involved in the stabilization of the negatively charged intermediate by the formation of the oxyanion hole motif; it reads HGG. Ser424 is a catalytic residue. Disordered stretches follow at residues 542–570 and 581–600; these read SVSK…TDSL and RNSS…ETLG. Ser552 carries the post-translational modification Phosphoserine; by PKA. Ser554 is subject to Phosphoserine; by AMPK. Over residues 581-596 the composition is skewed to polar residues; sequence RNSSDTTDTPELSLSA. Phosphoserine occurs at positions 595 and 649. Catalysis depends on residues Asp692 and His722.

Belongs to the 'GDXG' lipolytic enzyme family. In terms of assembly, monomer and homodimer. Interacts with CAVIN1 in the adipocyte cytoplasm. Interacts with PLIN5. Post-translationally, phosphorylation by AMPK reduces its translocation towards the lipid droplets.

The protein localises to the cell membrane. It is found in the membrane. It localises to the caveola. The protein resides in the cytoplasm. Its subcellular location is the cytosol. The protein localises to the lipid droplet. It catalyses the reaction a diacylglycerol + H2O = a monoacylglycerol + a fatty acid + H(+). It carries out the reaction a triacylglycerol + H2O = a diacylglycerol + a fatty acid + H(+). The catalysed reaction is a monoacylglycerol + H2O = glycerol + a fatty acid + H(+). The enzyme catalyses Hydrolyzes glycerol monoesters of long-chain fatty acids.. It catalyses the reaction 1,2-di-(9Z-octadecenoyl)-glycerol + (9Z)-octadecenoate + H(+) = 1,2,3-tri-(9Z-octadecenoyl)-glycerol + H2O. It carries out the reaction 2,3-di-(9Z)-octadecenoyl-sn-glycerol + H2O = 2-(9Z-octadecenoyl)-glycerol + (9Z)-octadecenoate + H(+). The catalysed reaction is cholesteryl (9Z-octadecenoate) + H2O = cholesterol + (9Z)-octadecenoate + H(+). The enzyme catalyses 1,2,3-tri-(9Z-octadecenoyl)-glycerol + H2O = di-(9Z)-octadecenoylglycerol + (9Z)-octadecenoate + H(+). It catalyses the reaction all-trans-retinyl hexadecanoate + H2O = all-trans-retinol + hexadecanoate + H(+). It carries out the reaction 1,2-di-(9Z-octadecenoyl)-glycerol + H2O = (9Z-octadecenoyl)-glycerol + (9Z)-octadecenoate + H(+). The catalysed reaction is 2-(5Z,8Z,11Z,14Z-eicosatetraenoyl)-glycerol + H2O = glycerol + (5Z,8Z,11Z,14Z)-eicosatetraenoate + H(+). The enzyme catalyses 1-(9Z-octadecenoyl)-glycerol + H2O = glycerol + (9Z)-octadecenoate + H(+). It catalyses the reaction 2-(9Z-octadecenoyl)-glycerol + H2O = glycerol + (9Z)-octadecenoate + H(+). It carries out the reaction 1-O-hexadecyl-2-acetyl-sn-glycerol + H2O = 1-O-hexadecyl-sn-glycerol + acetate + H(+). The catalysed reaction is 1,2-di-(9Z-octadecenoyl)-sn-glycerol + H2O = (9Z-octadecenoyl)-glycerol + (9Z)-octadecenoate + H(+). The enzyme catalyses 1,3-di-(9Z-octadecenoyl)-glycerol + H2O = 1-(9Z-octadecenoyl)-glycerol + (9Z)-octadecenoate + H(+). It catalyses the reaction 1,2-di-(9Z-octadecenoyl)-glycerol + H2O = 2-(9Z-octadecenoyl)-glycerol + (9Z)-octadecenoate + H(+). Its pathway is glycerolipid metabolism; triacylglycerol degradation. Lipase with broad substrate specificity, catalyzing the hydrolysis of triacylglycerols (TAGs), diacylglycerols (DAGs), monoacylglycerols (MAGs), cholesteryl esters and retinyl esters. Shows a preferential hydrolysis of DAGs over TAGs and MAGs. Preferentially hydrolyzes fatty acid (FA) esters at the sn-3 position of the glycerol backbone in DAGs and FA esters at the sn-1 and sn-2 positions of the glycerol backbone in TAGs. Catalyzes the hydrolysis of 2-arachidonoylglycerol, an endocannabinoid and of 2-acetyl monoalkylglycerol ether, the penultimate precursor of the pathway for de novo synthesis of platelet-activating factor. In adipose tissue and heart, it primarily hydrolyzes stored triglycerides to free fatty acids, while in steroidogenic tissues, it principally converts cholesteryl esters to free cholesterol for steroid hormone production. This Bos taurus (Bovine) protein is Hormone-sensitive lipase (LIPE).